A 1039-amino-acid polypeptide reads, in one-letter code: DIS3-like exonuclease 1 (1039 aa).

The CSD1 domain occupies 221 to 309 (PEHLPLEILE…KGRNGALCEN (89 aa)). Residues 359–425 (VLVMPWDYRI…AEIATILVEN (67 aa)) form the CSD2 domain. An RNB domain is found at 458–807 (RLDLRKTHLV…VHRLLLAAVN (350 aa)).

This sequence belongs to the RNR ribonuclease family. In terms of assembly, component of the RNA exosome complex. The cofactor is Mg(2+).

The protein localises to the cytoplasm. The catalysed reaction is Exonucleolytic cleavage in the 3'- to 5'-direction to yield nucleoside 5'-phosphates.. Its function is as follows. Catalytic component of the RNA exosome complex which has 3'-&gt;5' exoribonuclease activity and participates in a multitude of cellular RNA processing and degradation events. The sequence is that of DIS3-like exonuclease 1 (dis3l) from Xenopus tropicalis (Western clawed frog).